The following is a 267-amino-acid chain: Tryptophan synthase alpha chain (267 aa).

Residues Glu49 and Asp60 each act as proton acceptor in the active site.

Belongs to the TrpA family. As to quaternary structure, tetramer of two alpha and two beta chains.

It carries out the reaction (1S,2R)-1-C-(indol-3-yl)glycerol 3-phosphate + L-serine = D-glyceraldehyde 3-phosphate + L-tryptophan + H2O. The protein operates within amino-acid biosynthesis; L-tryptophan biosynthesis; L-tryptophan from chorismate: step 5/5. In terms of biological role, the alpha subunit is responsible for the aldol cleavage of indoleglycerol phosphate to indole and glyceraldehyde 3-phosphate. The sequence is that of Tryptophan synthase alpha chain from Geobacter sp. (strain M21).